The sequence spans 423 residues: Gamma-glutamyl phosphate reductase (423 aa).

This sequence belongs to the gamma-glutamyl phosphate reductase family.

It localises to the cytoplasm. It carries out the reaction L-glutamate 5-semialdehyde + phosphate + NADP(+) = L-glutamyl 5-phosphate + NADPH + H(+). It participates in amino-acid biosynthesis; L-proline biosynthesis; L-glutamate 5-semialdehyde from L-glutamate: step 2/2. Its function is as follows. Catalyzes the NADPH-dependent reduction of L-glutamate 5-phosphate into L-glutamate 5-semialdehyde and phosphate. The product spontaneously undergoes cyclization to form 1-pyrroline-5-carboxylate. The polypeptide is Gamma-glutamyl phosphate reductase (Burkholderia thailandensis (strain ATCC 700388 / DSM 13276 / CCUG 48851 / CIP 106301 / E264)).